The primary structure comprises 503 residues: MADDEDDIVWIREDTAQSSVPTSPTTPATIIEAAPVLSDAFDKPILKSVETISVSNGPPEVTISAPPPTPPAAPLAPQITPMVLSTVPDAAPAQDIPALILAALAPEPVPEPEPEVEAKQNVIVEKENEIKDQQQNDQLSAKLDPKTPNSVDDNSMSFDISECERKFNTAIREANDILEDFDKKSKQVAENTKFVAKELAELAADAPRVFQKTIEDHSQVPEISELPSGGLPKNVESVLIGEGILEEITGTLVLPTGQVLVTDERVGILLFNLEGDVLAKINPADFRKLWSPVYHKEHILVLADAKNAENHWSRHVIKFTCQLEYVAKIECPSWLAECTILRERLSIAHNDHLYLCVCGEIFSGIYELTPIGQWTELEYKLSEAYIDMLAFATIGPITQLLVVEGRRNYVLLVSVRESRIVDRKRMAICERPGALAKDEAGRLFVSNRFSASIQLVDTMRWVSEKNVAITEAFVRHFTACWGLLAIPLKNAVRLQRYSFRSLR.

Disordered stretches follow at residues 1–26 (MADD…SPTT) and 132–156 (DQQQ…DNSM). The segment covering 16 to 26 (AQSSVPTSPTT) has biased composition (low complexity). The span at 147–156 (TPNSVDDNSM) shows a compositional bias: polar residues.

This is an uncharacterized protein from Caenorhabditis elegans.